The sequence spans 71 residues: Large ribosomal subunit protein bL31 (71 aa).

Residues Cys-16, Cys-18, Cys-37, and Cys-40 each coordinate Zn(2+).

Belongs to the bacterial ribosomal protein bL31 family. Type A subfamily. In terms of assembly, part of the 50S ribosomal subunit. Zn(2+) is required as a cofactor.

Binds the 23S rRNA. This chain is Large ribosomal subunit protein bL31, found in Aeromonas salmonicida (strain A449).